The sequence spans 362 residues: Ferredoxin--NADP reductase, leaf-type isozyme, chloroplastic (362 aa).

The segment at 1 to 20 (MATAVSAAVSLPSSKSTSFS) is disordered. The N-terminal 62 residues, 1–62 (MATAVSAAVS…RAQVTTEAPA (62 aa)), are a transit peptide targeting the chloroplast. Residues 10–20 (SLPSSKSTSFS) show a composition bias toward low complexity. Residues 83–205 (KEPYVGRCLL…TGPVGKEMLM (123 aa)) enclose the FAD-binding FR-type domain. Residues 141–144 (RLYS), 162–164 (CVK), tyrosine 168, 179–181 (VCS), and threonine 220 each bind FAD. NADP(+) contacts are provided by serine 144 and lysine 164. NADP(+) contacts are provided by residues threonine 220, 252–253 (VP), 282–283 (SR), lysine 292, 321–322 (GL), and glutamate 360.

This sequence belongs to the ferredoxin--NADP reductase type 1 family. FAD serves as cofactor.

The protein localises to the plastid. The protein resides in the chloroplast stroma. It localises to the chloroplast thylakoid membrane. The catalysed reaction is 2 reduced [2Fe-2S]-[ferredoxin] + NADP(+) + H(+) = 2 oxidized [2Fe-2S]-[ferredoxin] + NADPH. The protein operates within energy metabolism; photosynthesis. In terms of biological role, may play a key role in regulating the relative amounts of cyclic and non-cyclic electron flow to meet the demands of the plant for ATP and reducing power. This Nicotiana tabacum (Common tobacco) protein is Ferredoxin--NADP reductase, leaf-type isozyme, chloroplastic (PETH).